We begin with the raw amino-acid sequence, 255 residues long: uncharacterized protein (255 aa).

Positions 122 and 160 each coordinate [4Fe-4S] cluster.

As to quaternary structure, homodimer. The cofactor is [4Fe-4S] cluster.

This is an uncharacterized protein from Escherichia coli (strain K12).